The chain runs to 225 residues: UPF0758 protein BCE_4545 (225 aa).

One can recognise an MPN domain in the interval Ser-103–Ile-225. Zn(2+) is bound by residues His-174, His-176, and Asp-187. The JAMM motif signature appears at His-174–Asp-187.

This sequence belongs to the UPF0758 family.

This is UPF0758 protein BCE_4545 from Bacillus cereus (strain ATCC 10987 / NRS 248).